The primary structure comprises 109 residues: Parvalbumin alpha (109 aa).

2 consecutive EF-hand domains span residues Lys-38–His-73 and Leu-77–Ala-109. Residues Asp-51, Asp-53, Ser-55, Glu-62, Asp-90, Asp-92, Asp-94, Lys-96, and Glu-101 each coordinate Ca(2+).

It belongs to the parvalbumin family.

Functionally, in muscle, parvalbumin is thought to be involved in relaxation after contraction. It binds two calcium ions. The protein is Parvalbumin alpha of Triakis semifasciata (Leopard shark).